We begin with the raw amino-acid sequence, 315 residues long: Heme oxygenase 2 (315 aa).

Acidic residues predominate over residues 1-12 (MSSEVETSEGVD). The segment at 1-28 (MSSEVETSEGVDESEKNSMAPEKENHTK) is disordered. Serine 2 carries the N-acetylserine modification. Residue serine 2 is modified to Phosphoserine. The Cytoplasmic portion of the chain corresponds to 2 to 294 (SSEVETSEGV…TTVAVLRKPS (293 aa)). The span at 13-28 (ESEKNSMAPEKENHTK) shows a compositional bias: basic and acidic residues. 4 residues coordinate heme b: histidine 44, tyrosine 153, lysine 198, and arginine 202. HRM repeat units follow at residues 263–268 (KCPFYA) and 280–285 (NCPFQT). S-nitrosocysteine occurs at positions 264 and 281. A helical; Anchor for type IV membrane protein membrane pass occupies residues 295–315 (LQLILAASVALVAGLLAWYYM).

The protein belongs to the heme oxygenase family. In terms of processing, a soluble form arises by proteolytic removal of the membrane anchor. Post-translationally, S-nitrosylated by BLVRB. In terms of tissue distribution, ubiquitous.

Its subcellular location is the microsome membrane. The protein localises to the endoplasmic reticulum membrane. It catalyses the reaction heme b + 3 reduced [NADPH--hemoprotein reductase] + 3 O2 = biliverdin IXalpha + CO + Fe(2+) + 3 oxidized [NADPH--hemoprotein reductase] + 3 H2O + H(+). Its function is as follows. Catalyzes the oxidative cleavage of heme at the alpha-methene bridge carbon, released as carbon monoxide (CO), to generate biliverdin IXalpha, while releasing the central heme iron chelate as ferrous iron. This is Heme oxygenase 2 (Hmox2) from Mus musculus (Mouse).